The following is a 722-amino-acid chain: D-(-)-3-hydroxybutyrate oligomer hydrolase (722 aa).

The signal sequence occupies residues 1 to 25 (MKTMQGKGSGRRLRGALLVTMAASG). S319 (charge relay system) is an active-site residue.

It belongs to the D-(-)-3-hydroxybutyrate oligomer hydrolase family.

It is found in the secreted. It carries out the reaction (3R)-hydroxybutanoate dimer + H2O = 2 (R)-3-hydroxybutanoate + H(+). It functions in the pathway lipid metabolism; butanoate metabolism. Inhibited by diisopropylfluorophosphate (DFP). Its function is as follows. Participates in the degradation of poly-3-hydroxybutyrate (PHB). It works downstream of poly(3-hydroxybutyrate) depolymerase, hydrolyzing D(-)-3-hydroxybutyrate oligomers of various length (3HB-oligomers) into 3HB-monomers. The polypeptide is D-(-)-3-hydroxybutyrate oligomer hydrolase (Ralstonia pickettii (Burkholderia pickettii)).